Consider the following 148-residue polypeptide: Aspartate carbamoyltransferase regulatory chain (148 aa).

The Zn(2+) site is built by cysteine 106, cysteine 111, cysteine 134, and cysteine 137.

It belongs to the PyrI family. As to quaternary structure, contains catalytic and regulatory chains. The cofactor is Zn(2+).

In terms of biological role, involved in allosteric regulation of aspartate carbamoyltransferase. The sequence is that of Aspartate carbamoyltransferase regulatory chain from Methanococcus vannielii (strain ATCC 35089 / DSM 1224 / JCM 13029 / OCM 148 / SB).